We begin with the raw amino-acid sequence, 177 residues long: MPKRSCPFTDAAPLQLKVHVSPRELSHGVFAERYSREVFERTKQLLFQGAQAYRDHIWGEGCSINHLPEPLKPGLVGAPQAARGQMLIGPDGRLTRCQAQASEAGLPGAAPIACSSCVRSVDGKAVCSQCERALCGQCVYTCWGCGALACVLCGLADYADDDDGEKTLCTSCAMFEA.

Tyrosine 34 bears the Phosphotyrosine; by ABL2 mark. The interval 36 to 55 is interaction with BCL2L1 isoform Bcl-x(L) and inhibition of BCL2L1 anti-apoptotic activity; it reads REVFERTKQLLFQGAQAYRD.

In terms of assembly, binds through its N-terminal region to the C-terminus of CD27 and to PXMP2/PMP22. Binds to the C-terminus of TNFRSF18/GITR. Binds to BCL2L1/BCLX isoform Bcl-x(L) but not to BAX. Requires Zn(2+) as cofactor. In terms of tissue distribution, in post-ischemic kidney, found in cells lining the S3 segment of proximal tubules at 12 hours and 1 day post-ischemia. At five and seven days post-ischemia, found in epithelial cells of papillary proliferations in regenerating tubules.

The protein resides in the cytoplasm. The protein localises to the nucleus. Functionally, induces CD27-mediated apoptosis. Inhibits BCL2L1 isoform Bcl-x(L) anti-apoptotic activity. Inhibits activation of NF-kappa-B and promotes T-cell receptor-mediated apoptosis. This is Apoptosis regulatory protein Siva (Siva1) from Rattus norvegicus (Rat).